We begin with the raw amino-acid sequence, 313 residues long: Short-chain dehydrogenase/reductase family 9C member 7 (313 aa).

29-53 provides a ligand contact to NADP(+); the sequence is FITGCDSGFGNLLARQLVDRGMRVL. Ser-160 lines the substrate pocket. The active-site Proton acceptor is Tyr-172. At Ser-185 the chain carries Phosphoserine.

Belongs to the short-chain dehydrogenases/reductases (SDR) family.

The protein resides in the cytoplasm. It carries out the reaction a N-[omega-(9R,10R)-epoxy-(13R)-hydroxy-(11E)-octadecenoyloxy]acyl-beta-D-glucosyl-(1&lt;-&gt;1)-sphing-4E-enine + NAD(+) = a N-[omega-(9R,10R)-epoxy-13-oxo-(11E)-octadecenoyloxy]acyl-beta-D-glucosyl-(1&lt;-&gt;1)-sphing-4E-enine + NADH + H(+). The catalysed reaction is a N-[omega-(9R,10R)-epoxy-(13R)-hydroxy-(11E)-octadecenoyloxy]-acylsphing-4E-enine + NAD(+) = a N-[omega-(9R,10R)-epoxy-13-oxo-(11E)-octadecenoyloxy]-acylsphing-4E-enine + NADH + H(+). Functionally, plays a crucial role in the formation of the epidermal permeability barrier. Catalyzes the NAD+-dependent dehydrogenation of the linoleate 9,10-trans-epoxy-11E-13-alcohol esterified in omega-O-acylceramides (such as in N-[omega-(9R,10R)-epoxy-(13R)-hydroxy-(11E)-octadecenoyloxy]-acylsphing-4E-enine) to the corresponding 13-ketone, the reactive moiety required for binding of epidermal ceramides to proteins. Displays weak conversion of all-trans-retinal to all-trans-retinol in the presence of NADH. Has apparently no steroid dehydrogenase activity. This chain is Short-chain dehydrogenase/reductase family 9C member 7 (SDR9C7), found in Bos taurus (Bovine).